The primary structure comprises 133 residues: Small ribosomal subunit protein uS9 (133 aa).

Over residues 98 to 113 the composition is skewed to basic and acidic residues; that stretch reads RKPLKTEGHLSRDPRA. A disordered region spans residues 98 to 133; that stretch reads RKPLKTEGHLSRDPRAKERRKYGLKKARKAPQFSKR. The segment covering 114–133 has biased composition (basic residues); sequence KERRKYGLKKARKAPQFSKR.

This sequence belongs to the universal ribosomal protein uS9 family.

This Parasynechococcus marenigrum (strain WH8102) protein is Small ribosomal subunit protein uS9.